We begin with the raw amino-acid sequence, 394 residues long: Dual specificity protein phosphatase 4 (394 aa).

Valine 2 bears the N-acetylvaline mark. The Rhodanese domain occupies 41 to 159; it reads SGGKCLLLDC…FSSEYPEFCS (119 aa). Residues 195-336 form the Tyrosine-protein phosphatase domain; the sequence is GPVEILPFLY…LLQFESQVLA (142 aa). Cysteine 280 functions as the Phosphocysteine intermediate in the catalytic mechanism. Phosphoserine; by MAPK is present on residues serine 386 and serine 391.

Belongs to the protein-tyrosine phosphatase family. Non-receptor class dual specificity subfamily. Hollow spherical complex composed of 24 subunits with pseudooctahedral symmetry, has a tetramer as the basic unit. In terms of processing, phosphorylation in the C-terminus by ERK1/2 inhibits proteasomal degradation and stabilizes the protein.

It is found in the nucleus. The catalysed reaction is O-phospho-L-tyrosyl-[protein] + H2O = L-tyrosyl-[protein] + phosphate. It carries out the reaction O-phospho-L-seryl-[protein] + H2O = L-seryl-[protein] + phosphate. It catalyses the reaction O-phospho-L-threonyl-[protein] + H2O = L-threonyl-[protein] + phosphate. Its function is as follows. Regulates mitogenic signal transduction by dephosphorylating both Thr and Tyr residues on MAP kinases ERK1 and ERK2. The polypeptide is Dual specificity protein phosphatase 4 (DUSP4) (Homo sapiens (Human)).